Consider the following 256-residue polypeptide: Trypsin CFT-1 (256 aa).

The N-terminal stretch at 1–17 (MRVTLALVALCLASVAA) is a signal peptide. A propeptide spans 18-24 (LPEKQQR) (activation peptide). The Peptidase S1 domain maps to 25–256 (IVGGSVTTIE…RFTAWIQANA (232 aa)). C55 and C71 are joined by a disulfide. Active-site charge relay system residues include H70 and D115. Cystine bridges form between C180-C197 and C209-C233. S213 serves as the catalytic Charge relay system.

It belongs to the peptidase S1 family.

It is found in the secreted. The protein resides in the extracellular space. It catalyses the reaction Preferential cleavage: Arg-|-Xaa, Lys-|-Xaa.. Responsible for the activation of delta-endotoxin from Bacillus thuringiensis. The chain is Trypsin CFT-1 from Choristoneura fumiferana (Spruce budworm moth).